Consider the following 184-residue polypeptide: Photosystem I assembly protein Ycf4 (184 aa).

Helical transmembrane passes span 19-39 and 57-77; these read ISNF…LLVG and IVFF…LFIS.

The protein belongs to the Ycf4 family.

It localises to the plastid. The protein localises to the chloroplast thylakoid membrane. Its function is as follows. Seems to be required for the assembly of the photosystem I complex. This Atropa belladonna (Belladonna) protein is Photosystem I assembly protein Ycf4.